A 251-amino-acid chain; its full sequence is Triosephosphate isomerase (251 aa).

Substrate is bound at residue 9-11 (NWK). Histidine 95 acts as the Electrophile in catalysis. The active-site Proton acceptor is glutamate 167. Residues glycine 173, serine 213, and 234-235 (GG) each bind substrate. Serine 213 carries the phosphoserine modification.

Belongs to the triosephosphate isomerase family. Homodimer.

It localises to the cytoplasm. It carries out the reaction D-glyceraldehyde 3-phosphate = dihydroxyacetone phosphate. The protein operates within carbohydrate biosynthesis; gluconeogenesis. It participates in carbohydrate degradation; glycolysis; D-glyceraldehyde 3-phosphate from glycerone phosphate: step 1/1. Functionally, involved in the gluconeogenesis. Catalyzes stereospecifically the conversion of dihydroxyacetone phosphate (DHAP) to D-glyceraldehyde-3-phosphate (G3P). This chain is Triosephosphate isomerase, found in Anoxybacillus flavithermus (strain DSM 21510 / WK1).